A 284-amino-acid chain; its full sequence is uncharacterized protein (284 aa).

Transmembrane regions (helical) follow at residues 174-194, 217-237, and 241-261; these read LFVL…YISI, MLIP…PGTA, and LIVL…SGSC.

The protein localises to the membrane. This is an uncharacterized protein from Saccharomyces cerevisiae (strain ATCC 204508 / S288c) (Baker's yeast).